The chain runs to 538 residues: Ribulokinase 1 (538 aa).

The protein belongs to the ribulokinase family.

It catalyses the reaction D-ribulose + ATP = D-ribulose 5-phosphate + ADP + H(+). The enzyme catalyses L-ribulose + ATP = L-ribulose 5-phosphate + ADP + H(+). Its pathway is carbohydrate degradation; L-arabinose degradation via L-ribulose; D-xylulose 5-phosphate from L-arabinose (bacterial route): step 2/3. The sequence is that of Ribulokinase 1 from Staphylococcus saprophyticus subsp. saprophyticus (strain ATCC 15305 / DSM 20229 / NCIMB 8711 / NCTC 7292 / S-41).